The chain runs to 301 residues: Acetylglutamate kinase (301 aa).

Substrate is bound by residues 68–69 (GG), Arg-90, and Asn-195.

Belongs to the acetylglutamate kinase family. ArgB subfamily.

Its subcellular location is the cytoplasm. The enzyme catalyses N-acetyl-L-glutamate + ATP = N-acetyl-L-glutamyl 5-phosphate + ADP. It functions in the pathway amino-acid biosynthesis; L-arginine biosynthesis; N(2)-acetyl-L-ornithine from L-glutamate: step 2/4. Functionally, catalyzes the ATP-dependent phosphorylation of N-acetyl-L-glutamate. In Pseudomonas putida (strain GB-1), this protein is Acetylglutamate kinase.